Here is a 130-residue protein sequence, read N- to C-terminus: Small ribosomal subunit protein uS8 (130 aa).

Belongs to the universal ribosomal protein uS8 family. Part of the 30S ribosomal subunit.

Its function is as follows. One of the primary rRNA binding proteins, it binds directly to 16S rRNA central domain where it helps coordinate assembly of the platform of the 30S subunit. In Methanocaldococcus jannaschii (strain ATCC 43067 / DSM 2661 / JAL-1 / JCM 10045 / NBRC 100440) (Methanococcus jannaschii), this protein is Small ribosomal subunit protein uS8 (rps8).